The sequence spans 497 residues: Glycerol kinase (497 aa).

T11 contributes to the ADP binding site. ATP is bound by residues T11, S12, and S13. T11 is a binding site for sn-glycerol 3-phosphate. Residue R15 coordinates ADP. 4 residues coordinate sn-glycerol 3-phosphate: R81, E82, Y133, and D242. Positions 81, 82, 133, 242, and 243 each coordinate glycerol. ADP-binding residues include T264 and G307. The ATP site is built by T264, G307, Q311, and G412. The ADP site is built by G412 and N416.

The protein belongs to the FGGY kinase family.

It catalyses the reaction glycerol + ATP = sn-glycerol 3-phosphate + ADP + H(+). It functions in the pathway polyol metabolism; glycerol degradation via glycerol kinase pathway; sn-glycerol 3-phosphate from glycerol: step 1/1. Inhibited by fructose 1,6-bisphosphate (FBP). Its function is as follows. Key enzyme in the regulation of glycerol uptake and metabolism. Catalyzes the phosphorylation of glycerol to yield sn-glycerol 3-phosphate. This Leptothrix cholodnii (strain ATCC 51168 / LMG 8142 / SP-6) (Leptothrix discophora (strain SP-6)) protein is Glycerol kinase.